A 142-amino-acid chain; its full sequence is Ribosome maturation factor RimP (142 aa).

The protein belongs to the RimP family.

Its subcellular location is the cytoplasm. Required for maturation of 30S ribosomal subunits. The protein is Ribosome maturation factor RimP of Aromatoleum aromaticum (strain DSM 19018 / LMG 30748 / EbN1) (Azoarcus sp. (strain EbN1)).